The following is a 175-amino-acid chain: uncharacterized protein (175 aa).

Over 1–2 the chain is Extracellular; sequence ME. A helical transmembrane segment spans residues 3–23; sequence SIILSIAIFIGVLLGTSVGAG. Residues 24-151 are Cytoplasmic-facing; sequence SGSSISPDVD…TGISTTMNAR (128 aa). The disordered stretch occupies residues 26–88; sequence SSISPDVDAG…DVGAGSGSSI (63 aa). Positions 59 to 78 are enriched in polar residues; it reads FSGSSTSPDVDAGSGSSTSP. A helical transmembrane segment spans residues 152 to 172; sequence VAVLITAAILSAPVTAIALLE. The Extracellular portion of the chain corresponds to 173–175; that stretch reads ARR.

The protein localises to the membrane. This is an uncharacterized protein from Saccharomyces cerevisiae (strain ATCC 204508 / S288c) (Baker's yeast).